Here is a 500-residue protein sequence, read N- to C-terminus: Protein adenylyltransferase Fic (500 aa).

A helical transmembrane segment spans residues 39 to 59 (LSFLIFFVIGSLFSGLMFALL). TPR repeat units lie at residues 122-155 (ALSS…SPRH) and 156-190 (PEIL…NPSH). The Inhibitory (S/T)XXXE(G/N) motif motif lies at 247-252 (SVGIEG). Residues Glu-251 and 333–336 (VGGH) contribute to the ATP site. Residues 302-437 (ITLKDLLEIH…IRPFVRFIAD (136 aa)) enclose the Fido domain. The active site involves His-380. Residues 384–391 (DGNGRTSR), 416–417 (YY), and Asn-424 contribute to the ATP site. The interval 477-500 (GREGGSTVHEGSGTGDSIRIGTMW) is disordered.

The protein belongs to the fic family. As to quaternary structure, homodimer.

The protein localises to the membrane. It carries out the reaction L-tyrosyl-[protein] + ATP = O-(5'-adenylyl)-L-tyrosyl-[protein] + diphosphate. It catalyses the reaction L-threonyl-[protein] + ATP = 3-O-(5'-adenylyl)-L-threonyl-[protein] + diphosphate. The enzyme catalyses 3-O-(5'-adenylyl)-L-threonyl-[protein] + H2O = L-threonyl-[protein] + AMP + H(+). With respect to regulation, the side chain of Glu-251 determines which of the two opposing activities (AMPylase or de-AMPylase) will take place. In response to endoplasmic reticulum stress, mediates de-AMPylase activity. Adenylyltransferase activity is inhibited by the inhibitory helix present at the N-terminus: Glu-251 binds ATP and competes with ATP-binding at Arg-391, thereby preventing adenylyltransferase activity. In unstressed cells, disengagement of Glu-251 promotes adenylyltransferase activity. Activation dissociates ATP-binding from Glu-251, allowing ordered binding of the entire ATP moiety with the alpha-phosphate in an orientation that is productive for accepting an incoming target hydroxyl side chain. Protein that can both mediate the addition of adenosine 5'-monophosphate (AMP) to specific residues of target proteins (AMPylation), and the removal of the same modification from target proteins (de-AMPylation), depending on the context. The side chain of Glu-251 determines which of the two opposing activities (AMPylase or de-AMPylase) will take place. Acts as a key regulator of the unfolded protein response (UPR) by mediating AMPylation or de-AMPylation of Hsc70-3/BiP. In unstressed cells, acts as an adenylyltransferase by mediating AMPylation of Hsc70-3/BiP at 'Thr-518', thereby inactivating it. In response to endoplasmic reticulum stress, acts as a phosphodiesterase by mediating removal of ATP (de-AMPylation) from Hsc70-3/BiP at 'Thr-518', leading to restore HSPA5/BiP activity. The chain is Protein adenylyltransferase Fic from Culex quinquefasciatus (Southern house mosquito).